The following is a 394-amino-acid chain: DNA primase large subunit PriL (394 aa).

[4Fe-4S] cluster-binding residues include Cys-231, Cys-340, Cys-351, and Cys-357.

This sequence belongs to the eukaryotic-type primase large subunit family. Heterodimer of a small subunit (PriS) and a large subunit (PriL). The cofactor is [4Fe-4S] cluster.

Its function is as follows. Regulatory subunit of DNA primase, an RNA polymerase that catalyzes the synthesis of short RNA molecules used as primers for DNA polymerase during DNA replication. Stabilizes and modulates the activity of the small subunit, increasing the rate of DNA synthesis, and conferring RNA synthesis capability. The DNA polymerase activity may enable DNA primase to also catalyze primer extension after primer synthesis. May also play a role in DNA repair. In Pyrococcus horikoshii (strain ATCC 700860 / DSM 12428 / JCM 9974 / NBRC 100139 / OT-3), this protein is DNA primase large subunit PriL.